Reading from the N-terminus, the 492-residue chain is GlcNAc-binding protein A (492 aa).

The first 23 residues, 1–23 (MNKSSTKTLIALSMMAVSSGVSA), serve as a signal peptide directing secretion. The Chitin-binding type-4 domain occupies 24 to 204 (HGYVSETNDG…AFYNVIDVKF (181 aa)). The region spanning 443-484 (AGTKVLAEDGNVYQCKEFPYSGYCVQWTETATNFAPGVGSDW) is the Chitin-binding type-3 domain.

This sequence belongs to the GbpA family.

It localises to the secreted. Functionally, probably interacts with GlcNAc residues. May promote attachment to both epithelial cell surfaces and chitin. This Aliivibrio fischeri (strain ATCC 700601 / ES114) (Vibrio fischeri) protein is GlcNAc-binding protein A.